Reading from the N-terminus, the 507-residue chain is Glycerol kinase 1 (507 aa).

Residue threonine 12 coordinates ADP. Residues threonine 12, threonine 13, and serine 14 each contribute to the ATP site. Residue threonine 12 coordinates sn-glycerol 3-phosphate. Arginine 16 contacts ADP. Residues arginine 82, glutamate 83, tyrosine 134, and aspartate 249 each coordinate sn-glycerol 3-phosphate. Positions 82, 83, 134, 249, and 250 each coordinate glycerol. ADP-binding residues include threonine 271 and glycine 315. Threonine 271, glycine 315, glutamine 319, and glycine 416 together coordinate ATP. Residues glycine 416 and asparagine 420 each contribute to the ADP site.

Belongs to the FGGY kinase family.

The catalysed reaction is glycerol + ATP = sn-glycerol 3-phosphate + ADP + H(+). It functions in the pathway polyol metabolism; glycerol degradation via glycerol kinase pathway; sn-glycerol 3-phosphate from glycerol: step 1/1. Its activity is regulated as follows. Inhibited by fructose 1,6-bisphosphate (FBP). In terms of biological role, key enzyme in the regulation of glycerol uptake and metabolism. Catalyzes the phosphorylation of glycerol to yield sn-glycerol 3-phosphate. This is Glycerol kinase 1 from Streptomyces coelicolor (strain ATCC BAA-471 / A3(2) / M145).